The primary structure comprises 364 residues: Mannonate dehydratase (364 aa).

This sequence belongs to the mannonate dehydratase family. Fe(2+) is required as a cofactor. Mn(2+) serves as cofactor.

It carries out the reaction D-mannonate = 2-dehydro-3-deoxy-D-gluconate + H2O. Its pathway is carbohydrate metabolism; pentose and glucuronate interconversion. Its function is as follows. Catalyzes the dehydration of D-mannonate. This chain is Mannonate dehydratase, found in Endomicrobium trichonymphae.